The primary structure comprises 551 residues: Scaffold protein OPG125 (551 aa).

It belongs to the orthopoxvirus protein OPG125 family. As to quaternary structure, homotrimer. Self-assembles to form a layer. Interacts with OPG158 (via N-terminus); this interaction is necessary for OPG125 association with membranes.

The protein localises to the membrane. Functionally, scaffold protein which forms a transitory spherical honeycomb lattice providing curvature and rigidity to the convex membrane of crescent and immature virions (IV). This association occurs concomitantly with viral membrane formation. Targeted by the drug rifampicin, which prevents the formation of this lattice, and hence virus morphogenesis. In the presence of rifampicin, irregularly shaped membranes that lack the honeycomb layer accumulate around areas of electron-dense viroplasm. This layer is lost from virions during maturation from IV to mature virion (MV), through the proteolysis of OPG158 N-terminus. In Vaccinia virus (strain Ankara) (VACV), this protein is Scaffold protein OPG125 (OPG125).